A 690-amino-acid chain; its full sequence is Elongation factor G (690 aa).

The 276-residue stretch at 8–283 folds into the tr-type G domain; that stretch reads EDYRNFGIMA…AVVDYLPSPV (276 aa). GTP-binding positions include 17–24, 81–85, and 135–138; these read AHIDAGKT, DTPGH, and NKMD.

It belongs to the TRAFAC class translation factor GTPase superfamily. Classic translation factor GTPase family. EF-G/EF-2 subfamily.

Its subcellular location is the cytoplasm. Its function is as follows. Catalyzes the GTP-dependent ribosomal translocation step during translation elongation. During this step, the ribosome changes from the pre-translocational (PRE) to the post-translocational (POST) state as the newly formed A-site-bound peptidyl-tRNA and P-site-bound deacylated tRNA move to the P and E sites, respectively. Catalyzes the coordinated movement of the two tRNA molecules, the mRNA and conformational changes in the ribosome. This is Elongation factor G from Rhodopseudomonas palustris (strain HaA2).